A 495-amino-acid polypeptide reads, in one-letter code: Cytochrome P450 monooxygenase 113 (495 aa).

A helical transmembrane segment spans residues 2-22; sequence FLQIAACFTVIGLLYGLVSNL. Cysteine 428 is a heme binding site.

This sequence belongs to the cytochrome P450 family. Heme is required as a cofactor.

It is found in the membrane. The protein operates within secondary metabolite biosynthesis. Functionally, cytochrome P450 monooxygenase that is able to use 4-ethoxybenzoic acid as a substrate for oxidation. In Postia placenta (strain ATCC 44394 / Madison 698-R) (Brown rot fungus), this protein is Cytochrome P450 monooxygenase 113.